A 787-amino-acid polypeptide reads, in one-letter code: Protocadherin beta-15 (787 aa).

An N-terminal signal peptide occupies residues 1 to 26 (MEPAGERFPEQRQVLILLLLLEVTLA). The Extracellular segment spans residues 27 to 690 (GWEPRRYSVM…AQADSLTVYL (664 aa)). Cadherin domains are found at residues 35-133 (VMEE…SPEF), 138-242 (MTLK…APEF), 247-347 (YEVQ…FPEL), 352-451 (LTSP…APAF), and 456-561 (YTLF…SPFV). Residue N418 is glycosylated (N-linked (GlcNAc...) asparagine). N-linked (GlcNAc...) asparagine glycosylation is present at N567. Residues 568-671 (GSAPCTELVP…LVDGFSQPYL (104 aa)) enclose the Cadherin 6 domain. Residues 691-711 (VVALASVSSLFLFSVFLFVAV) traverse the membrane as a helical segment. At 712-787 (RLCRRSRAAS…DSRRKSEFLE (76 aa)) the chain is on the cytoplasmic side.

The protein localises to the cell membrane. In terms of biological role, potential calcium-dependent cell-adhesion protein. May be involved in the establishment and maintenance of specific neuronal connections in the brain. The protein is Protocadherin beta-15 (PCDHB15) of Homo sapiens (Human).